The following is a 157-amino-acid chain: Vesicle transport protein SFT2B (157 aa).

Position 1 is an N-acetylmethionine (M1). At 1–36 (MDKLKKVLSGQDTEDRSGLSEVVESSSLSWSTRIKG) the chain is on the cytoplasmic side. At S9 the chain carries Phosphoserine. Residues 37–57 (FIVCFALGILCSLLGTLLLWV) form a helical membrane-spanning segment. The Lumenal portion of the chain corresponds to 58–61 (SRKG). A helical membrane pass occupies residues 62–82 (LFAVFYTLGNITSIGSTMFLM). Residues 83–96 (GPLKQLKRMFEPTR) are Cytoplasmic-facing. Residues 97–117 (LIATILVLLFFVLTLCSAFLW) form a helical membrane-spanning segment. Over 118-120 (NKG) the chain is Lumenal. The helical transmembrane segment at 121-141 (LALIFCILQSLALTWYSLSYI) threads the bilayer. Topologically, residues 142–157 (PYARDAVKKCFAVCLT) are cytoplasmic.

It belongs to the SFT2 family.

It is found in the membrane. In terms of biological role, may be involved in fusion of retrograde transport vesicles derived from an endocytic compartment with the Golgi complex. In Rattus norvegicus (Rat), this protein is Vesicle transport protein SFT2B.